The chain runs to 276 residues: 3-keto-5-aminohexanoate cleavage enzyme (276 aa).

E14 is a binding site for (5S)-5-amino-3-oxohexanoate. Zn(2+) contacts are provided by H46 and H48. (5S)-5-amino-3-oxohexanoate-binding residues include S82, G85, T106, and N108. E230 is a binding site for Zn(2+).

This sequence belongs to the BKACE family. Kce subfamily. As to quaternary structure, homotetramer. Zn(2+) serves as cofactor.

It catalyses the reaction (5S)-5-amino-3-oxohexanoate + acetyl-CoA = (3S)-3-aminobutanoyl-CoA + acetoacetate. It participates in amino-acid degradation; L-lysine degradation via acetate pathway. Involved in the anaerobic fermentation of lysine. Catalyzes the reversible reaction between 3-keto-5-aminohexanoate (KAH) and acetyl-CoA to form 3-aminobutyryl-CoA and acetoacetate. The reaction involves the deprotonation of KAH, the nucleophilic addition onto acetyl-CoA and the intramolecular transfer of the CoA moiety. This Cloacimonas acidaminovorans (strain Evry) protein is 3-keto-5-aminohexanoate cleavage enzyme.